The primary structure comprises 443 residues: Exodeoxyribonuclease 7 large subunit (443 aa).

Belongs to the XseA family. As to quaternary structure, heterooligomer composed of large and small subunits.

It localises to the cytoplasm. The enzyme catalyses Exonucleolytic cleavage in either 5'- to 3'- or 3'- to 5'-direction to yield nucleoside 5'-phosphates.. Functionally, bidirectionally degrades single-stranded DNA into large acid-insoluble oligonucleotides, which are then degraded further into small acid-soluble oligonucleotides. In Vibrio vulnificus (strain CMCP6), this protein is Exodeoxyribonuclease 7 large subunit.